The chain runs to 231 residues: ATP phosphoribosyltransferase (231 aa).

The protein belongs to the ATP phosphoribosyltransferase family. Short subfamily. In terms of assembly, heteromultimer composed of HisG and HisZ subunits.

The protein localises to the cytoplasm. The catalysed reaction is 1-(5-phospho-beta-D-ribosyl)-ATP + diphosphate = 5-phospho-alpha-D-ribose 1-diphosphate + ATP. It participates in amino-acid biosynthesis; L-histidine biosynthesis; L-histidine from 5-phospho-alpha-D-ribose 1-diphosphate: step 1/9. Catalyzes the condensation of ATP and 5-phosphoribose 1-diphosphate to form N'-(5'-phosphoribosyl)-ATP (PR-ATP). Has a crucial role in the pathway because the rate of histidine biosynthesis seems to be controlled primarily by regulation of HisG enzymatic activity. The protein is ATP phosphoribosyltransferase of Brucella melitensis biotype 2 (strain ATCC 23457).